The primary structure comprises 329 residues: DNA-directed RNA polymerase subunit alpha (329 aa).

The tract at residues 1–231 is alpha N-terminal domain (alpha-NTD); that stretch reads MQNSLLKPKA…EQLAVFAQLE (231 aa). The alpha C-terminal domain (alpha-CTD) stretch occupies residues 249 to 329; sequence FDPILLRPVD…SWPPAALEKR (81 aa).

The protein belongs to the RNA polymerase alpha chain family. In terms of assembly, homodimer. The RNAP catalytic core consists of 2 alpha, 1 beta, 1 beta' and 1 omega subunit. When a sigma factor is associated with the core the holoenzyme is formed, which can initiate transcription.

The catalysed reaction is RNA(n) + a ribonucleoside 5'-triphosphate = RNA(n+1) + diphosphate. In terms of biological role, DNA-dependent RNA polymerase catalyzes the transcription of DNA into RNA using the four ribonucleoside triphosphates as substrates. The polypeptide is DNA-directed RNA polymerase subunit alpha (Albidiferax ferrireducens (strain ATCC BAA-621 / DSM 15236 / T118) (Rhodoferax ferrireducens)).